The sequence spans 77 residues: Tachyplesin-2 (77 aa).

A signal peptide spans M1–A23. 2 disulfide bridges follow: C26–C39 and C30–C35. Residue R40 is modified to Arginine amide. A propeptide spanning residues G41–E77 is cleaved from the precursor.

The protein belongs to the tachyplesin/polyphemusin family. In terms of tissue distribution, hemocytes.

Its subcellular location is the secreted. In terms of biological role, significantly inhibits the growth of Gram-negative and Gram-positive bacteria. This is Tachyplesin-2 from Tachypleus tridentatus (Japanese horseshoe crab).